A 499-amino-acid chain; its full sequence is Glucooligosaccharide oxidase (499 aa).

The signal sequence occupies residues 1–25 (MVRIQELTAALSLASVVQASWIQKR). The cysteines at positions 31 and 80 are disulfide-linked. The FAD-binding PCMH-type domain occupies 58–230 (VDYDPAAIAI…SEFEFNTFEA (173 aa)). Positions 95-155 (HSYGSYGFGG…GNRALSHGTC (61 aa)) form a cross-link, 6-(S-cysteinyl)-8alpha-(pros-histidyl)-FAD (His-Cys). Residues Tyr97, Thr154, and Arg270 each coordinate substrate. Asn330 and Asn366 each carry an N-linked (GlcNAc...) asparagine glycan. Substrate contacts are provided by Gln378 and Gln409. An N-linked (GlcNAc...) asparagine glycan is attached at Asn419. Tyr454 is a binding site for substrate. The active-site Proton acceptor is the Tyr454.

It belongs to the oxygen-dependent FAD-linked oxidoreductase family. FAD is required as a cofactor. In terms of processing, the FAD cofactor is bound via a bicovalent 6-S-cysteinyl, 8alpha-N1-histidyl FAD linkage.

The protein localises to the secreted. The enzyme catalyses beta-lactose + O2 = lactobiono-1,5-lactone + H2O2. It carries out the reaction D-cellobiose + O2 = D-cellobiono-1,5-lactone + H2O2. The catalysed reaction is D-cellotriose + O2 = D-cellotriono-1,5-lactone + H2O2. It catalyses the reaction D-cellotetraose + O2 = D-cellotetraono-1,5-lactone + H2O2. The enzyme catalyses D-cellopentaose + O2 = D-cellopentaono-1,5-lactone + H2O2. It carries out the reaction D-cellohexaose + O2 = D-cellohexaono-1,5-lactone + H2O2. In terms of biological role, catalyzes the selective oxidation of C1 hydroxyl moieties on mono- and disaccharides with concomitant reduction of molecular oxygen to hydrogen peroxide. This results in the formation of the corresponding lactones, which typically undergo spontaneous hydrolysis. Glucooligosaccharide oxidase is able to oxidize the monosaccharide D-glucose as well as the disaccharides maltose, cellobiose, and lactose. In addition, it shows high selectivity for cello- and maltooligosaccharides, indicating that glucooligosaccharide oxidase prefers oligosaccharides with a beta-D-glucosyl unit on the reducing end and additional sugar units linked by alpha- or beta-1,4 glucosidic bonds. This chain is Glucooligosaccharide oxidase (gluO), found in Sarocladium strictum (Black bundle disease fungus).